The primary structure comprises 86 residues: uncharacterized protein (86 aa).

This is an uncharacterized protein from Bacillus subtilis (strain 168).